Here is a 37-residue protein sequence, read N- to C-terminus: Large ribosomal subunit protein bL36 (37 aa).

It belongs to the bacterial ribosomal protein bL36 family.

The protein is Large ribosomal subunit protein bL36 of Thermus thermophilus (strain ATCC BAA-163 / DSM 7039 / HB27).